The sequence spans 173 residues: Zinc finger A20 and AN1 domain-containing stress-associated protein 2 (173 aa).

The A20-type zinc finger occupies 12–46 (PEGPKLCTNNCGFFGSAATMNMCSKCHKDMLFQQE). The Zn(2+) site is built by Cys-18, Cys-22, Cys-34, Cys-37, Cys-114, Cys-117, Cys-128, Cys-130, Cys-135, His-138, His-144, and Cys-146. The segment at 108 to 154 (PKGPSRCTTCNKRVGLTGFKCRCGSLFCGTHRYADVHDCSFNYHAAA) adopts an AN1-type zinc-finger fold.

In terms of biological role, may be involved in environmental stress response. This chain is Zinc finger A20 and AN1 domain-containing stress-associated protein 2 (SAP2), found in Arabidopsis thaliana (Mouse-ear cress).